The following is a 1728-amino-acid chain: U3 small nucleolar RNA-associated protein 10 (1728 aa).

HEAT repeat units follow at residues 540–578 (DKDFQAIIPYCAVALSDPAKKVRRAAADLIAVLGSLVKE), 881–926 (PANH…MMPA), 986–1024 (FMGSSEVIPPLIDTFRRRGRNVVASTKDLLASFVTAYEH), 1191–1229 (LLSIAEFIKSVEALLDRPNVGLRQKVLRALELRVDSEST), 1235–1274 (REALLAFLPQLTAVIRESDDMSYKHTAVTCVDKISEKYGK), 1622–1662 (ADAT…GQAA), and 1683–1721 (LQALPEMLPYISELQDDDDEVVERENRRWIVEIEEKLGE).

Belongs to the HEATR1/UTP10 family. Component of the ribosomal small subunit (SSU) processome.

It is found in the nucleus. Its subcellular location is the nucleolus. Functionally, involved in nucleolar processing of pre-18S ribosomal RNA. Involved in ribosome biosynthesis. This chain is U3 small nucleolar RNA-associated protein 10, found in Chaetomium globosum (strain ATCC 6205 / CBS 148.51 / DSM 1962 / NBRC 6347 / NRRL 1970) (Soil fungus).